The chain runs to 313 residues: tRNA (guanine-N(7)-)-methyltransferase (313 aa).

Positions 33, 58, and 85 each coordinate S-adenosyl-L-methionine. Substrate contacts are provided by residues Lys-112, Asp-144, and 177-180; that span reads TRYE.

The protein belongs to the class I-like SAM-binding methyltransferase superfamily. TrmB family.

The enzyme catalyses guanosine(46) in tRNA + S-adenosyl-L-methionine = N(7)-methylguanosine(46) in tRNA + S-adenosyl-L-homocysteine. It functions in the pathway tRNA modification; N(7)-methylguanine-tRNA biosynthesis. In terms of biological role, catalyzes the formation of N(7)-methylguanine at position 46 (m7G46) in tRNA. This chain is tRNA (guanine-N(7)-)-methyltransferase, found in Thermotoga maritima (strain ATCC 43589 / DSM 3109 / JCM 10099 / NBRC 100826 / MSB8).